The following is a 456-amino-acid chain: tRNA modification GTPase MnmE (456 aa).

Residues arginine 24, glutamate 81, and lysine 120 each coordinate (6S)-5-formyl-5,6,7,8-tetrahydrofolate. A TrmE-type G domain is found at 216-379 (GMTVVIAGRP…LRDHLKGCMG (164 aa)). Asparagine 226 contributes to the K(+) binding site. Residues 226-231 (NAGKSS), 245-251 (TDIAGTT), 270-273 (DTAG), and 335-338 (NKAD) each bind GTP. Mg(2+) is bound at residue serine 230. 3 residues coordinate K(+): threonine 245, isoleucine 247, and threonine 250. Threonine 251 contacts Mg(2+). Residue lysine 456 participates in (6S)-5-formyl-5,6,7,8-tetrahydrofolate binding.

This sequence belongs to the TRAFAC class TrmE-Era-EngA-EngB-Septin-like GTPase superfamily. TrmE GTPase family. As to quaternary structure, homodimer. Heterotetramer of two MnmE and two MnmG subunits. The cofactor is K(+).

The protein localises to the cytoplasm. Its function is as follows. Exhibits a very high intrinsic GTPase hydrolysis rate. Involved in the addition of a carboxymethylaminomethyl (cmnm) group at the wobble position (U34) of certain tRNAs, forming tRNA-cmnm(5)s(2)U34. This is tRNA modification GTPase MnmE from Pseudomonas putida (strain ATCC 47054 / DSM 6125 / CFBP 8728 / NCIMB 11950 / KT2440).